The sequence spans 223 residues: Ribose-5-phosphate isomerase A (223 aa).

Substrate contacts are provided by residues 32–35 (TGST), 83–86 (DGAD), and 96–99 (KGGG). The Proton acceptor role is filled by glutamate 105. Lysine 123 lines the substrate pocket.

It belongs to the ribose 5-phosphate isomerase family. Homodimer.

It catalyses the reaction aldehydo-D-ribose 5-phosphate = D-ribulose 5-phosphate. Its pathway is carbohydrate degradation; pentose phosphate pathway; D-ribose 5-phosphate from D-ribulose 5-phosphate (non-oxidative stage): step 1/1. Its function is as follows. Catalyzes the reversible conversion of ribose-5-phosphate to ribulose 5-phosphate. In Acinetobacter baumannii (strain ATCC 17978 / DSM 105126 / CIP 53.77 / LMG 1025 / NCDC KC755 / 5377), this protein is Ribose-5-phosphate isomerase A.